Reading from the N-terminus, the 272-residue chain is CD40 ligand (272 aa).

Topologically, residues 1-23 (MNEAYSPAAPRPMGSTSPSTMKM) are cytoplasmic. The helical; Signal-anchor for type II membrane protein transmembrane segment at 24-44 (FMCFLSVFMVVQTIGTVLFCL) threads the bilayer. At 45-272 (YLHMKMDKME…GNTYFGMFKL (228 aa)) the chain is on the extracellular side. 2 N-linked (GlcNAc...) asparagine glycosylation sites follow: asparagine 124 and asparagine 146. The region spanning 136 to 272 (IATHLAGVKS…GNTYFGMFKL (137 aa)) is the THD domain. A disulfide bridge links cysteine 190 with cysteine 229. A glycan (N-linked (GlcNAc...) asparagine) is linked at asparagine 251.

It belongs to the tumor necrosis factor family. Homotrimer. Interacts with CD28. CD40 ligand, soluble form: Exists as either a monomer or a homotrimer. Forms a ternary complex between CD40 and integrins for CD40-CD40LG signaling. In terms of processing, the soluble form derives from the membrane form by proteolytic processing.

Its subcellular location is the cell membrane. The protein resides in the cell surface. The protein localises to the secreted. Its function is as follows. Cytokine that acts as a ligand to CD40/TNFRSF5. Costimulates T-cell proliferation and cytokine production. Induces the activation of NF-kappa-B. Mediates B-cell proliferation in the absence of co-stimulus as well as IgE production in the presence of IL4. Involved in immunoglobulin class switching. In terms of biological role, acts as a ligand for integrins, specifically ITGA5:ITGB1 and ITGAV:ITGB3; both integrins and the CD40 receptor are required for activation of CD40-CD40LG signaling, which have cell-type dependent effects, such as B-cell activation, NF-kappa-B signaling and anti-apoptotic signaling. This is CD40 ligand (CD40LG) from Gallus gallus (Chicken).